A 338-amino-acid polypeptide reads, in one-letter code: Protein-glutamate methylesterase/protein-glutamine glutaminase 2 (338 aa).

In terms of domain architecture, Response regulatory spans arginine 2 to leucine 119. Aspartate 53 bears the 4-aspartylphosphate mark. The CheB-type methylesterase domain occupies proline 145–valine 330. Catalysis depends on residues serine 158, histidine 185, and aspartate 278.

Belongs to the CheB family. Phosphorylated by CheA. Phosphorylation of the N-terminal regulatory domain activates the methylesterase activity.

It is found in the cytoplasm. The enzyme catalyses [protein]-L-glutamate 5-O-methyl ester + H2O = L-glutamyl-[protein] + methanol + H(+). It carries out the reaction L-glutaminyl-[protein] + H2O = L-glutamyl-[protein] + NH4(+). Functionally, involved in chemotaxis. Part of a chemotaxis signal transduction system that modulates chemotaxis in response to various stimuli. Catalyzes the demethylation of specific methylglutamate residues introduced into the chemoreceptors (methyl-accepting chemotaxis proteins or MCP) by CheR. Also mediates the irreversible deamidation of specific glutamine residues to glutamic acid. The chain is Protein-glutamate methylesterase/protein-glutamine glutaminase 2 from Cupriavidus metallidurans (strain ATCC 43123 / DSM 2839 / NBRC 102507 / CH34) (Ralstonia metallidurans).